A 692-amino-acid chain; its full sequence is Transforming growth factor beta activator LRRC33 (692 aa).

The signal sequence occupies residues 1–18; sequence MELLPLWLCLGFHFLTVG. At 19–650 the chain is on the extracellular side; the sequence is WRNRSGTATA…CKWERLDLGL (632 aa). N21 carries an N-linked (GlcNAc...) asparagine glycan. Positions 29 to 56 constitute an LRRNT domain; that stretch reads ASQGVCKLVGGAADCRGQSLASVPSSLP. 10 LRR repeats span residues 58-79, 82-103, 106-127, 133-155, 158-179, 182-203, 206-227, 228-239, 251-272, and 273-294; these read HARMLTLDANPLKTLWNHSLQP, LLESLSLHSCHLERISRGAFQE, HLRSLVLGDNCLSENYEETAAA, GLRRLDLSGNALTEDMAALMLQN, SLRSVSLAGNTIMRLDDSVFEG, RLRELDLQRNYIFEIEGGAFDG, ELRHLNLAFNNLPCIVDFGLTR, LRVLNVSYNVLE, ELETLDLSHNQLLFFPLLPQYS, and KLRTLLLRDNNMGFYRDLYNTS. N74 carries N-linked (GlcNAc...) asparagine glycosylation. N-linked (GlcNAc...) asparagine glycosylation occurs at N155. N-linked (GlcNAc...) asparagine glycosylation occurs at N232. 3 N-linked (GlcNAc...) asparagine glycosylation sites follow: N292, N309, and N312. LRR repeat units lie at residues 329–350, 353–374, 377–398, 403–424, 427–447, 463–484, 486–507, 512–534, 537–558, 559–580, and 585–594; these read DLRFLDMSQNQFQYLPDGFLRK, SLSHLNLHQNCLMTLHIREHEP, ALTELDLSHNQLSELHLAPGLA, SLRLFNLSSNQLLGVPPGLFAN, NITTLDMSHNQISLCPLPAAS, SLRSLSLEGCGLGALPDCPFQG, SLTYLDLSSNWGVLNGSLAPLQ, MLQVLSLRNMGLHSSFMALDFSG, NLRDLDLSGNCLTTFPRFGGSL, ALETLDLRRNSLTALPQKAVSE, and GLRTIYLSQN. N408 and N427 each carry an N-linked (GlcNAc...) asparagine glycan. N500 carries N-linked (GlcNAc...) asparagine glycosylation. One can recognise an LRRCT domain in the interval 595–643; that stretch reads PYDCCGVDGWGALQHGQTVADWAMVTCNLSSKIIRVTELPGGVPRDCKW. A glycan (N-linked (GlcNAc...) asparagine) is linked at N622. Residues 651 to 671 traverse the membrane as a helical segment; the sequence is LYLVLILPSCLTLLVACTVIV. Residues 672-692 are Cytoplasmic-facing; it reads LTFKKPLLQVIKSRCHWSSVY.

This sequence belongs to the LRRC32/LRRC33 family. In terms of assembly, interacts with TGFB1; associates via disulfide bonds with the Latency-associated peptide chain (LAP) regulatory chain of TGFB1, leading to regulate activation of TGF-beta-1. Interacts (via LRR repeats) with TLR2, TLR3, TLR4, TLR9 and probably other Toll-like receptors. Interacts with CYBB/NOX2; the interaction is direct. Mainly expressed in cells of hematopoietic origin. Highly expressed in bone marrow, thymus, liver, lung, intestine and spleen. In the brain, highly expressed in microglia.

It is found in the cell membrane. It localises to the endoplasmic reticulum membrane. In terms of biological role, key regulator of transforming growth factor beta-1 (TGFB1) specifically required for microglia function in the nervous system. Required for activation of latent TGF-beta-1 in macrophages and microglia: associates specifically via disulfide bonds with the Latency-associated peptide (LAP), which is the regulatory chain of TGFB1, and regulates integrin-dependent activation of TGF-beta-1. TGF-beta-1 activation mediated by LRRC33/NRROS is highly localized: there is little spreading of TGF-beta-1 activated from one microglial cell to neighboring microglia, suggesting the existence of localized and selective activation of TGF-beta-1 by LRRC33/NRROS. Indirectly plays a role in Toll-like receptor (TLR) signaling: ability to inhibit TLR-mediated NF-kappa-B activation and cytokine production is probably a consequence of its role in TGF-beta-1 signaling. The chain is Transforming growth factor beta activator LRRC33 from Homo sapiens (Human).